A 236-amino-acid polypeptide reads, in one-letter code: Phosphoribosylaminoimidazole-succinocarboxamide synthase (236 aa).

The protein belongs to the SAICAR synthetase family.

It catalyses the reaction 5-amino-1-(5-phospho-D-ribosyl)imidazole-4-carboxylate + L-aspartate + ATP = (2S)-2-[5-amino-1-(5-phospho-beta-D-ribosyl)imidazole-4-carboxamido]succinate + ADP + phosphate + 2 H(+). The protein operates within purine metabolism; IMP biosynthesis via de novo pathway; 5-amino-1-(5-phospho-D-ribosyl)imidazole-4-carboxamide from 5-amino-1-(5-phospho-D-ribosyl)imidazole-4-carboxylate: step 1/2. In Lysinibacillus sphaericus (strain C3-41), this protein is Phosphoribosylaminoimidazole-succinocarboxamide synthase.